Reading from the N-terminus, the 112-residue chain is Phosphoribosyl-ATP pyrophosphatase (112 aa).

The protein belongs to the PRA-PH family.

The protein resides in the cytoplasm. The enzyme catalyses 1-(5-phospho-beta-D-ribosyl)-ATP + H2O = 1-(5-phospho-beta-D-ribosyl)-5'-AMP + diphosphate + H(+). It functions in the pathway amino-acid biosynthesis; L-histidine biosynthesis; L-histidine from 5-phospho-alpha-D-ribose 1-diphosphate: step 2/9. The sequence is that of Phosphoribosyl-ATP pyrophosphatase from Chromohalobacter salexigens (strain ATCC BAA-138 / DSM 3043 / CIP 106854 / NCIMB 13768 / 1H11).